A 333-amino-acid polypeptide reads, in one-letter code: Thiamine-monophosphate kinase (333 aa).

Aspartate 44, serine 58, threonine 59, and aspartate 60 together coordinate Mg(2+). Histidine 67 lines the substrate pocket. Mg(2+) is bound by residues aspartate 89 and aspartate 137. ATP contacts are provided by residues glycine 136–aspartate 137 and arginine 162. Aspartate 224 is a binding site for Mg(2+). An ATP-binding site is contributed by serine 226. Aspartate 227 is a Mg(2+) binding site. The substrate site is built by glutamate 278 and tryptophan 320.

Belongs to the thiamine-monophosphate kinase family.

It carries out the reaction thiamine phosphate + ATP = thiamine diphosphate + ADP. Its pathway is cofactor biosynthesis; thiamine diphosphate biosynthesis; thiamine diphosphate from thiamine phosphate: step 1/1. Its function is as follows. Catalyzes the ATP-dependent phosphorylation of thiamine-monophosphate (TMP) to form thiamine-pyrophosphate (TPP), the active form of vitamin B1. The chain is Thiamine-monophosphate kinase from Mycobacterium tuberculosis (strain CDC 1551 / Oshkosh).